A 922-amino-acid polypeptide reads, in one-letter code: Golgi-associated RAB2 interactor protein 5B (922 aa).

Disordered regions lie at residues Asp244–His264, Gln292–His317, Thr373–Ser404, Ala424–Thr597, Gln758–Ser830, and Ala842–Val869. A compositionally biased stretch (polar residues) spans Gln292–Ala305. Residues Lys431 to Lys441 are compositionally biased toward pro residues. Composition is skewed to low complexity over residues Ala442–Pro458 and Lys471–Val495. Positions Pro496–Gln507 are enriched in pro residues. The segment covering Gln758–Trp788 has biased composition (basic and acidic residues).

The protein belongs to the GARIN family.

The protein is Golgi-associated RAB2 interactor protein 5B of Homo sapiens (Human).